We begin with the raw amino-acid sequence, 466 residues long: Argininosuccinate lyase (466 aa).

Belongs to the lyase 1 family. Argininosuccinate lyase subfamily.

Its subcellular location is the cytoplasm. It carries out the reaction 2-(N(omega)-L-arginino)succinate = fumarate + L-arginine. It participates in amino-acid biosynthesis; L-arginine biosynthesis; L-arginine from L-ornithine and carbamoyl phosphate: step 3/3. This is Argininosuccinate lyase from Ehrlichia ruminantium (strain Gardel).